The chain runs to 246 residues: Carboxy-S-adenosyl-L-methionine synthase (246 aa).

S-adenosyl-L-methionine is bound by residues Tyr-39, 64–66 (GCS), 89–90 (DN), 121–122 (DI), Asn-136, and Arg-203.

This sequence belongs to the class I-like SAM-binding methyltransferase superfamily. Cx-SAM synthase family. In terms of assembly, homodimer.

It catalyses the reaction prephenate + S-adenosyl-L-methionine = carboxy-S-adenosyl-L-methionine + 3-phenylpyruvate + H2O. Catalyzes the conversion of S-adenosyl-L-methionine (SAM) to carboxy-S-adenosyl-L-methionine (Cx-SAM). The chain is Carboxy-S-adenosyl-L-methionine synthase from Pseudomonas aeruginosa (strain UCBPP-PA14).